The chain runs to 66 residues: Potassium channel toxin alpha-KTx (66 aa).

A signal peptide spans Met1–Ala21. 4 disulfide bridges follow: Cys29–Cys49, Cys35–Cys59, Cys39–Cys61, and Cys44–Cys64.

It belongs to the short scorpion toxin superfamily. Potassium channel inhibitor family. In terms of tissue distribution, expressed by the venom gland.

The protein resides in the secreted. Its function is as follows. Blocks voltage-gated potassium channels. This Hoffmannihadrurus gertschi (Scorpion) protein is Potassium channel toxin alpha-KTx.